The primary structure comprises 89 residues: Small ribosomal subunit protein uS15 (89 aa).

Belongs to the universal ribosomal protein uS15 family. As to quaternary structure, part of the 30S ribosomal subunit. Forms a bridge to the 50S subunit in the 70S ribosome, contacting the 23S rRNA.

In terms of biological role, one of the primary rRNA binding proteins, it binds directly to 16S rRNA where it helps nucleate assembly of the platform of the 30S subunit by binding and bridging several RNA helices of the 16S rRNA. Functionally, forms an intersubunit bridge (bridge B4) with the 23S rRNA of the 50S subunit in the ribosome. This chain is Small ribosomal subunit protein uS15, found in Paracoccus denitrificans (strain Pd 1222).